The chain runs to 302 residues: Acetylglutamate kinase (302 aa).

Substrate is bound by residues Gly-67–Gly-68, Arg-89, and Asn-189.

It belongs to the acetylglutamate kinase family. ArgB subfamily.

Its subcellular location is the cytoplasm. The enzyme catalyses N-acetyl-L-glutamate + ATP = N-acetyl-L-glutamyl 5-phosphate + ADP. Its pathway is amino-acid biosynthesis; L-arginine biosynthesis; N(2)-acetyl-L-ornithine from L-glutamate: step 2/4. Its function is as follows. Catalyzes the ATP-dependent phosphorylation of N-acetyl-L-glutamate. The chain is Acetylglutamate kinase from Streptomyces clavuligerus.